The sequence spans 1011 residues: Retinoblastoma-related protein (1011 aa).

The tract at residues 1 to 22 (MSQASVDMEDVKPSISLPSDDG) is disordered. Residues 411–612 (TPVSTAMTTA…ERGSSMYNSL (202 aa)) form a domain A region. The pocket stretch occupies residues 411 to 860 (TPVSTAMTTA…NEVFIPSVKP (450 aa)). Residues 613 to 729 (IVARPTLAAE…PAGGGETCAE (117 aa)) are spacer. Residues 730 to 860 (TGINIFFNKI…NEVFIPSVKP (131 aa)) form a domain B region. The disordered stretch occupies residues 872–903 (QKSKSSPEDSNNADSQIPGSPRLSPFPNLPDM). Over residues 873-889 (KSKSSPEDSNNADSQIP) the composition is skewed to polar residues.

The protein belongs to the retinoblastoma protein (RB) family.

It localises to the nucleus. Functionally, regulator of biological processes that recruits a histone deacetylase to control gene transcription. May play a role in the entry into mitosis, negatively regulating the cell proliferation. Formation of stable complexes with geminiviridae replication-associated proteins may create a cellular environment which favors viral DNA replication. In Cocos nucifera (Coconut palm), this protein is Retinoblastoma-related protein (Rb1).